Reading from the N-terminus, the 1888-residue chain is Tensin-1 (1888 aa).

Pro residues predominate over residues 21–31; that stretch reads PQPPGTPPGPA. Residues 21–45 are disordered; sequence PQPPGTPPGPARPERCEPGGAAPDP. The segment at 61–108 adopts a Phorbol-ester/DAG-type zinc-finger fold; that stretch reads THHFKVKAFKKVKPCGICRQAITREGCVCKVCSFSCHRKCQAKVAAPC. Residues 132 to 174 form a disordered region; the sequence is GEGDCRVGSSPKNLEEGGSMRVSPSIQPQPQSQPTSLSRNTSV. A compositionally biased stretch (low complexity) spans 154-167; it reads SPSIQPQPQSQPTS. The 173-residue stretch at 175–347 folds into the Phosphatase tensin-type domain; it reads SRAMEDSCEL…HYFSGLLSGS (173 aa). The C2 tensin-type domain maps to 352–478; the sequence is NKPLFLHHVI…GKVEFVFSYG (127 aa). Phosphoserine occurs at positions 509 and 535. Phosphotyrosine is present on tyrosine 537. Disordered stretches follow at residues 543–608, 696–722, and 789–854; these read KDSL…PQEK, VTNTSESGYPETLSPLTNGLDKPYSTE, and RSQS…SAET. Position 549 is a phosphoserine (serine 549). Positions 571–584 are enriched in polar residues; that stretch reads LSVSSDSGNSTAST. Serine 604 is modified (phosphoserine). Serine 792 carries the post-translational modification Phosphoserine. Positions 835 to 852 are enriched in polar residues; that stretch reads RSPLQSLARSKPSPQLSA. Serine 867 is modified (phosphoserine). Disordered stretches follow at residues 893 to 1077 and 1109 to 1555; these read PLHK…RSPV and EEME…AGSL. Low complexity predominate over residues 905–922; the sequence is PGASPLSSQPLLGSSRQS. Phosphoserine is present on residues serine 930, serine 935, and serine 952. Residues 962-986 are compositionally biased toward polar residues; that stretch reads GSNQSFHPKSPASSTFLPSPHSSAG. A Phosphothreonine modification is found at threonine 1015. Serine 1054 is modified (phosphoserine). A compositionally biased stretch (polar residues) spans 1057–1069; that stretch reads QYENQSPEATSPR. Tyrosine 1058 is subject to Phosphotyrosine. Phosphoserine is present on residues serine 1062, serine 1118, and serine 1122. A compositionally biased stretch (basic and acidic residues) spans 1169-1179; the sequence is EVTKPPEEPRS. Positions 1227–1239 are enriched in low complexity; the sequence is SPSPLSTSSPILS. The span at 1240-1257 shows a compositional bias: polar residues; that stretch reads ADSTSVGSFPSVVSSDQG. Serine 1279 carries the post-translational modification Phosphoserine. Residues 1284-1300 are compositionally biased toward low complexity; it reads SYQSSSPVPVGGSSYNS. The span at 1301–1322 shows a compositional bias: polar residues; that stretch reads PDYSLQPFSSSPESQGQPQYSA. Serine 1321 carries O-linked (GalNAc...) serine glycosylation. Serine 1331 bears the Phosphoserine mark. At threonine 1343 the chain carries Phosphothreonine. At serine 1346 the chain carries Phosphoserine. At threonine 1420 the chain carries Phosphothreonine. Serine 1423 is modified (phosphoserine). A compositionally biased stretch (polar residues) spans 1436-1446; sequence NLASSLHSNAV. A phosphoserine mark is found at serine 1448, serine 1463, and serine 1468. Over residues 1490–1507 the composition is skewed to polar residues; the sequence is LSRQSSASGYQAPSTPSF. Residues 1518-1530 show a composition bias toward low complexity; it reads SSPATSPSPDSAA. Residues serine 1535, serine 1547, serine 1554, and serine 1599 each carry the phosphoserine modification. An SH2 domain is found at 1616–1725; sequence WYKPEISREQ…ALPCKLVIPS (110 aa). Serine 1741 bears the Phosphoserine mark. The 135-residue stretch at 1751–1885 folds into the PTB domain; the sequence is ACNVLFVNSV…FVSKVMLSAG (135 aa).

The protein belongs to the PTEN phosphatase protein family. As to quaternary structure, binds to actin filaments and interacts with phosphotyrosine-containing proteins. Interacts with STARD8. Interacts with protein phosphatase PPP1CA. Interacts (via N-terminus) with Rho GTPase-activating protein DLC1; the interaction is decreased by phosphorylation of TNS1. Interacts with tyrosine-phosphorylated proteins BCAR1/p130Cas and PTK2/FAK; the interactions are increased by phosphorylation of TNS1. Post-translationally, extensively phosphorylated on serine and threonine residues in a p38 MAPK-dependent manner which reduces interaction with DLC1 and increases interaction with tyrosine-phosphorylated proteins including BCAR1/p130cas and PTK2/FAK. The majority of the phosphorylated Ser/Thr residues are immediately adjacent to a proline residue. Also phosphorylated on tyrosine residues. In terms of processing, rapidly cleaved by calpain II.

It is found in the cell surface. It localises to the cell junction. Its subcellular location is the focal adhesion. The protein localises to the cytoplasm. The protein resides in the cytoskeleton. May act as a protein phosphatase and/or a lipid phosphatase. Involved in fibrillar adhesion formation. Essential for myofibroblast differentiation and myofibroblast-mediated extracellular matrix deposition. Enhances RHOA activation in the presence of DLC1. Plays a role in cell polarization and migration. May be involved in cartilage development and in linking signal transduction pathways to the cytoskeleton. In Mus musculus (Mouse), this protein is Tensin-1.